We begin with the raw amino-acid sequence, 444 residues long: Sprouty-related, EVH1 domain-containing protein 1 (444 aa).

The residue at position 2 (Ser2) is an N-acetylserine. A WH1 domain is found at Ala6–Ile123. Lys225 bears the N6-methyllysine mark. Residues Ser234–Gln286 form the KBD domain. Residue Ser239 is modified to Phosphoserine. Residues Trp268–Asp287 form a disordered region. Ser309 is subject to Phosphoserine. The required for interaction with TESK1 stretch occupies residues Ser333–Gly444. Residues Arg334 to Ala442 form the SPR domain.

In terms of assembly, homodimer and heterodimer. Able to interact with SPRED2 to form heterodimers. Interacts (via C-terminus) with TAOK1/MARKK (via C-terminus); the interaction does not affect TAOK1 kinase activity. Interacts (via C-terminus) with TESK1 (via C-terminus); the interaction inhibits TESK1 kinase activity. Interacts with CAV1. Interacts with RAS. Interacts with palmitoyltransferase ZDHHC17/HIP14; the interaction leads to palmitoylation of SPRED1. Palmitoylated by ZDHHC17/HIP14. Post-translationally, ubiquitinated. In terms of processing, phosphorylated on tyrosine. As to expression, expressed in brain. Weakly expressed in lung, heart, liver, kidney, intestine, spleen, testis, thymus, colon and ovary. Also expressed in embryonic tissues such as heart, lung, liver and brain. Highly expressed in IL3-dependent hematopoietic cell lines (Ba/F3 and MC/9) and bone marrow-derived mast cells (BMMC).

The protein localises to the cell membrane. The protein resides in the membrane. It localises to the caveola. It is found in the nucleus. Tyrosine kinase substrate that inhibits growth-factor-mediated activation of MAP kinase. Negatively regulates hematopoiesis of bone marrow. Inhibits fibroblast growth factor (FGF)-induced retinal lens fiber differentiation, probably by inhibiting FGF-mediated phosphorylation of ERK1/2. Attenuates actin stress fiber formation via inhibition of TESK1-mediated phosphorylation of cofilin. Inhibits TGFB-induced epithelial-to-mesenchymal transition in lens epithelial cells. This Mus musculus (Mouse) protein is Sprouty-related, EVH1 domain-containing protein 1 (Spred1).